Here is a 427-residue protein sequence, read N- to C-terminus: Serine--tRNA ligase (427 aa).

233–235 (TAE) contributes to the L-serine binding site. 264 to 266 (RSE) provides a ligand contact to ATP. Glu287 contributes to the L-serine binding site. 351–354 (EISS) contacts ATP. Ser386 is an L-serine binding site.

The protein belongs to the class-II aminoacyl-tRNA synthetase family. Type-1 seryl-tRNA synthetase subfamily. In terms of assembly, homodimer. The tRNA molecule binds across the dimer.

It is found in the cytoplasm. It carries out the reaction tRNA(Ser) + L-serine + ATP = L-seryl-tRNA(Ser) + AMP + diphosphate + H(+). The catalysed reaction is tRNA(Sec) + L-serine + ATP = L-seryl-tRNA(Sec) + AMP + diphosphate + H(+). It participates in aminoacyl-tRNA biosynthesis; selenocysteinyl-tRNA(Sec) biosynthesis; L-seryl-tRNA(Sec) from L-serine and tRNA(Sec): step 1/1. In terms of biological role, catalyzes the attachment of serine to tRNA(Ser). Is also able to aminoacylate tRNA(Sec) with serine, to form the misacylated tRNA L-seryl-tRNA(Sec), which will be further converted into selenocysteinyl-tRNA(Sec). This is Serine--tRNA ligase from Dechloromonas aromatica (strain RCB).